A 197-amino-acid polypeptide reads, in one-letter code: Holliday junction branch migration complex subunit RuvA (197 aa).

The domain I stretch occupies residues 1–64 (MIASVRGTLI…EDALTLYGFK (64 aa)). A domain II region spans residues 65–145 (TVEQRQLFET…GLPVAPGVSP (81 aa)). Residues 146 to 153 (AVAAVNAE) form a flexible linker region. The tract at residues 153–197 (ELSEMLVSLGFSSAEASTAIAALPPDAPLDLEERLRLALRYFGAR) is domain III.

Belongs to the RuvA family. In terms of assembly, homotetramer. Forms an RuvA(8)-RuvB(12)-Holliday junction (HJ) complex. HJ DNA is sandwiched between 2 RuvA tetramers; dsDNA enters through RuvA and exits via RuvB. An RuvB hexamer assembles on each DNA strand where it exits the tetramer. Each RuvB hexamer is contacted by two RuvA subunits (via domain III) on 2 adjacent RuvB subunits; this complex drives branch migration. In the full resolvosome a probable DNA-RuvA(4)-RuvB(12)-RuvC(2) complex forms which resolves the HJ.

The protein resides in the cytoplasm. In terms of biological role, the RuvA-RuvB-RuvC complex processes Holliday junction (HJ) DNA during genetic recombination and DNA repair, while the RuvA-RuvB complex plays an important role in the rescue of blocked DNA replication forks via replication fork reversal (RFR). RuvA specifically binds to HJ cruciform DNA, conferring on it an open structure. The RuvB hexamer acts as an ATP-dependent pump, pulling dsDNA into and through the RuvAB complex. HJ branch migration allows RuvC to scan DNA until it finds its consensus sequence, where it cleaves and resolves the cruciform DNA. This Roseiflexus castenholzii (strain DSM 13941 / HLO8) protein is Holliday junction branch migration complex subunit RuvA.